The following is a 430-amino-acid chain: Adenylosuccinate synthetase (430 aa).

GTP is bound by residues Gly12–Lys18 and Gly40–Thr42. Residue Asp13 is the Proton acceptor of the active site. Mg(2+) contacts are provided by Asp13 and Gly40. IMP is bound by residues Asp13–Lys16, Asn38–His41, Thr128, Arg142, Gln223, Thr238, and Arg302. The active-site Proton donor is His41. Position 298 to 304 (Thr298 to Arg304) interacts with substrate. GTP-binding positions include Arg304, Ser330 to Asp332, and Ser412 to Gly414.

The protein belongs to the adenylosuccinate synthetase family. In terms of assembly, homodimer. Requires Mg(2+) as cofactor.

The protein localises to the cytoplasm. The catalysed reaction is IMP + L-aspartate + GTP = N(6)-(1,2-dicarboxyethyl)-AMP + GDP + phosphate + 2 H(+). It functions in the pathway purine metabolism; AMP biosynthesis via de novo pathway; AMP from IMP: step 1/2. In terms of biological role, plays an important role in the de novo pathway of purine nucleotide biosynthesis. Catalyzes the first committed step in the biosynthesis of AMP from IMP. The polypeptide is Adenylosuccinate synthetase (Streptococcus equi subsp. equi (strain 4047)).